The chain runs to 201 residues: Sterile alpha motif domain-containing protein 12 (201 aa).

The 67-residue stretch at 77–143 (WTQQDVCKWL…LQQVLQLKVR (67 aa)) folds into the SAM domain.

Expressed in the brain.

This chain is Sterile alpha motif domain-containing protein 12 (SAMD12), found in Homo sapiens (Human).